We begin with the raw amino-acid sequence, 307 residues long: 4-hydroxy-tetrahydrodipicolinate synthase (307 aa).

Residue Thr49 participates in pyruvate binding. The active-site Proton donor/acceptor is the Tyr138. The active-site Schiff-base intermediate with substrate is the Lys166. Residue Ile207 coordinates pyruvate.

This sequence belongs to the DapA family. In terms of assembly, homotetramer; dimer of dimers.

It localises to the cytoplasm. It catalyses the reaction L-aspartate 4-semialdehyde + pyruvate = (2S,4S)-4-hydroxy-2,3,4,5-tetrahydrodipicolinate + H2O + H(+). The protein operates within amino-acid biosynthesis; L-lysine biosynthesis via DAP pathway; (S)-tetrahydrodipicolinate from L-aspartate: step 3/4. In terms of biological role, catalyzes the condensation of (S)-aspartate-beta-semialdehyde [(S)-ASA] and pyruvate to 4-hydroxy-tetrahydrodipicolinate (HTPA). The chain is 4-hydroxy-tetrahydrodipicolinate synthase from Limosilactobacillus reuteri (strain DSM 20016) (Lactobacillus reuteri).